The sequence spans 670 residues: Lebercilin-like protein (670 aa).

The interval 30–51 is disordered; it reads KRSPGTGDFSRNSNASNKSVDY. A compositionally biased stretch (polar residues) spans 38–51; the sequence is FSRNSNASNKSVDY. Coiled-coil stretches lie at residues 148–259 and 305–336; these read LHKI…EREE and AAQT…IKNI. Residues 374 to 393 are disordered; that stretch reads HQGTQKSDVPPLTTKGKKAT. A coiled-coil region spans residues 420–440; sequence EDSKRKYEDLSGEEKHLEVQI. Disordered stretches follow at residues 495-516, 557-580, and 609-670; these read RSMQ…YTKG, KHLS…SFGK, and LKTD…KIII. 2 stretches are compositionally biased toward basic and acidic residues: residues 560-572 and 621-632; these read SNRE…HSDS and GSEEPLQSKESH. Residues 651 to 662 are compositionally biased toward polar residues; that stretch reads TVVNSIKPSSPT.

It belongs to the LCA5 family.

In Homo sapiens (Human), this protein is Lebercilin-like protein (LCA5L).